Reading from the N-terminus, the 142-residue chain is Large ribosomal subunit protein bL17 (142 aa).

This sequence belongs to the bacterial ribosomal protein bL17 family. As to quaternary structure, part of the 50S ribosomal subunit. Contacts protein L32.

The chain is Large ribosomal subunit protein bL17 from Brucella abortus (strain S19).